A 387-amino-acid chain; its full sequence is S-adenosylmethionine synthase (387 aa).

ATP is bound at residue His16. A Mg(2+)-binding site is contributed by Asp18. Residue Glu44 participates in K(+) binding. Positions 57 and 100 each coordinate L-methionine. The interval 100–110 (QSADIAVGVDE) is flexible loop. Residues 165 to 167 (DAK), Asp241, 247 to 248 (RK), Ala264, and Lys268 each bind ATP. Asp241 is an L-methionine binding site. An L-methionine-binding site is contributed by Lys272.

This sequence belongs to the AdoMet synthase family. Homotetramer; dimer of dimers. The cofactor is Mg(2+). It depends on K(+) as a cofactor.

It localises to the cytoplasm. It carries out the reaction L-methionine + ATP + H2O = S-adenosyl-L-methionine + phosphate + diphosphate. It participates in amino-acid biosynthesis; S-adenosyl-L-methionine biosynthesis; S-adenosyl-L-methionine from L-methionine: step 1/1. Catalyzes the formation of S-adenosylmethionine (AdoMet) from methionine and ATP. The overall synthetic reaction is composed of two sequential steps, AdoMet formation and the subsequent tripolyphosphate hydrolysis which occurs prior to release of AdoMet from the enzyme. This is S-adenosylmethionine synthase from Marinomonas sp. (strain MWYL1).